The chain runs to 558 residues: Transcription termination factor MTEF18, mitochondrial (558 aa).

The transit peptide at 1 to 58 directs the protein to the mitochondrion; that stretch reads MFMVRLKFASISHNFSTVAAKHRRVPSKYKSLAIGKAQQAITDYLHTTRSLSYTHAEQ.

The protein belongs to the mTERF family.

It is found in the mitochondrion. Functionally, transcription termination factor involved in the regulation of mitochondrial-encoded gene expression. Essential for normal plant growth and development. This chain is Transcription termination factor MTEF18, mitochondrial, found in Arabidopsis thaliana (Mouse-ear cress).